Consider the following 132-residue polypeptide: Small ribosomal subunit protein uS8 (132 aa).

This sequence belongs to the universal ribosomal protein uS8 family. As to quaternary structure, part of the 30S ribosomal subunit. Contacts proteins S5 and S12.

In terms of biological role, one of the primary rRNA binding proteins, it binds directly to 16S rRNA central domain where it helps coordinate assembly of the platform of the 30S subunit. The protein is Small ribosomal subunit protein uS8 of Bacillus mycoides (strain KBAB4) (Bacillus weihenstephanensis).